A 462-amino-acid chain; its full sequence is Dipeptidyl peptidase 1 (462 aa).

An N-terminal signal peptide occupies residues Met-1–Ser-24. Residues Asn-29 and Asn-53 are each glycosylated (N-linked (GlcNAc...) asparagine). 2 disulfide bridges follow: Cys-30-Cys-118 and Cys-54-Cys-136. A propeptide spanning residues Ala-135–Ser-229 is cleaved from the precursor. Asn-144 carries an N-linked (GlcNAc...) asparagine glycan. Disulfide bonds link Cys-254/Cys-297, Cys-290/Cys-330, and Cys-320/Cys-336. Cys-257 is an active-site residue. N-linked (GlcNAc...) asparagine glycosylation occurs at Asn-275. Chloride-binding residues include Phe-301 and Tyr-303. Tyr-346 provides a ligand contact to chloride. Active-site residues include His-404 and Asn-426.

It belongs to the peptidase C1 family. As to quaternary structure, tetramer of heterotrimers consisting of exclusion domain, heavy- and light chains. Requires chloride as cofactor. In terms of tissue distribution, broadly distributed, but higher levels found in liver, spleen, intestine, lung and kidney.

The protein resides in the lysosome. The enzyme catalyses Release of an N-terminal dipeptide, Xaa-Yaa-|-Zaa-, except when Xaa is Arg or Lys, or Yaa or Zaa is Pro.. Thiol protease. Has dipeptidylpeptidase activity. Active against a broad range of dipeptide substrates composed of both polar and hydrophobic amino acids. Proline cannot occupy the P1 position and arginine cannot occupy the P2 position of the substrate. Can act as both an exopeptidase and endopeptidase. Activates serine proteases such as elastase, cathepsin G and granzymes A and B. This is Dipeptidyl peptidase 1 (Ctsc) from Rattus norvegicus (Rat).